The primary structure comprises 30 residues: Thermophilic aminopeptidase 1 alpha chain (30 aa).

This sequence belongs to the peptidase M42 family. As to quaternary structure, 12 chains of two different but homologous types, alpha and beta, which can combine in various ratios. The cofactor is a divalent metal cation.

Functionally, metalloenzyme of broad specificity, releasing all N-terminal amino acids. The chain is Thermophilic aminopeptidase 1 alpha chain from Geobacillus stearothermophilus (Bacillus stearothermophilus).